The chain runs to 274 residues: Ribose-5-phosphate isomerase (274 aa).

It belongs to the ribose 5-phosphate isomerase family.

Its subcellular location is the cytoplasm. It carries out the reaction aldehydo-D-ribose 5-phosphate = D-ribulose 5-phosphate. The protein operates within carbohydrate degradation; pentose phosphate pathway; D-ribose 5-phosphate from D-ribulose 5-phosphate (non-oxidative stage): step 1/1. This Kluyveromyces lactis (strain ATCC 8585 / CBS 2359 / DSM 70799 / NBRC 1267 / NRRL Y-1140 / WM37) (Yeast) protein is Ribose-5-phosphate isomerase (RKI1).